The following is a 1391-amino-acid chain: Axoneme-associated protein mst101(2) (1391 aa).

Disordered stretches follow at residues 170–213 (ECNQ…GKKL) and 280–300 (SSEPKKKGKKKKNDEKKEKEL). The segment covering 184 to 201 (TKKGKTKGKSGGGNKKRS) has biased composition (basic residues). The segment covering 291–300 (KNDEKKEKEL) has biased composition (basic and acidic residues). A run of 59 repeats spans residues 332–347 (KKKCKDLGRKMKEEAE), 348–363 (KKKCAALAKKQKEEDE), 364–379 (KKACKELAKKKKEADE), 380–395 (KKKCEEAANKEKKAAE), 396–411 (KKKCEKAAKERKEAAE), 412–427 (KKKCEEAAKKEKEAAE), 428–443 (RKKCEELAKNIKKAAE), 444–459 (KKKCKEAAKKEKEAAE), 460–475 (RKKCEELAKKIKKAAE), 476–491 (KKKCEETAKKGKEVAE), 492–507 (RKKCEELAKKIKKAEI), 508–523 (KKKCKKLAKKEKETAE), 524–539 (KKKCEKAAKKRKEAAE), 540–555 (KKKCEKAAKKRKEAAE), 556–571 (KKKCEKSAKKRKEAAE), 572–587 (KKKCEKAAKERKEAAE), 588–603 (KKKCEEAAKKEKEVAE), 604–619 (RKKCEELAKKIKKAAE), 620–635 (KKKCKEAAKKEKEAAE), 636–651 (REKCGELAKKIKKAAE), 652–667 (KKKCKKLAKKEKETAE), 668–683 (KKKCEKAAKKRKEAAE), 684–699 (KKKCAEAAKKEKEAAE), 700–715 (KKKCEEAAKKEKEAAE), 716–731 (RKKCEELAKKIKKAAE), 732–747 (KKKCKKLAKKKKAGEK), 748–763 (NKLKKGNKKGKKALKE), 764–779 (KKKCRELAKKKAAEKK), 780–795 (KCKEAAKKEKEAAEKK), 796–811 (KCEKTAKKRKEEAEKK), 812–827 (KCEKTAKKRKEAAEKK), 828–843 (KCEKAAKKRKEEAEKK), 844–859 (KCEKTAKKRKETAEKK), 860–875 (KCEKAAKKRKQAAEKK), 876–891 (KCEKAAKKRKEAAEKK), 892–907 (KCAEAAKKEKELAEKK), 908–923 (KCEEAAKKEKEVAERK), 924–939 (KCEELAKKIKKAAEKK), 940–955 (KCKKLAKKEKKAGEKN), 956–971 (KLKKKAGKGKKKCKKL), 972–987 (GKKSKRAAEKKKCAEA), 988–1003 (AKKEKEAATKKKCEER), 1004–1019 (AKKQKEAAEKKQCEER), 1020–1035 (AKKLKEAAEQKQCEER), 1036–1051 (AKKLKEAAEKKQCEER), 1052–1067 (AKKLKEAAEQKQCEER), 1068–1083 (AKKLKEAAEKKQCEER), 1084–1099 (AKKEKEAAEKKQCEER), 1100–1115 (AKKLKEAAEKKQCEER), 1116–1131 (AKKEKEAAEKKRCEEA), 1132–1147 (AKREKEAAEKKKCAEA), 1148–1163 (AKKEKEATEKQKCAEA), 1164–1179 (AKKEKEAAEKKKCAEA), 1180–1195 (AKREKEAAQKKKCADL), 1196–1211 (AKKEQEPAEMKKCEEA), 1212–1227 (AKKEKEAAEKQKCAKA), 1228–1243 (AKKEKEAAEKKKCAEA), 1244–1259 (AKKEQEAAEKKKCAEA), and 1260–1275 (AKKEKEAEKKRKCEKA). The tract at residues 332 to 1275 (KKKCKDLGRK…AEKKRKCEKA (944 aa)) is 59 X 16 AA approximate tandem repeats of [KR]-K-X-C-X-X-X-A-K-X-X-K-X-X-X-E. A disordered region spans residues 370-429 (LAKKKKEADEKKKCEEAANKEKKAAEKKKCEKAAKERKEAAEKKKCEEAAKKEKEAAERK). Residues 516–577 (KKEKETAEKK…EAAEKKKCEK (62 aa)) are disordered. Residues 517-577 (KEKETAEKKK…EAAEKKKCEK (61 aa)) show a composition bias toward basic and acidic residues. The span at 729-765 (AAEKKKCKKLAKKKKAGEKNKLKKGNKKGKKALKEKK) shows a compositional bias: basic residues. Disordered regions lie at residues 729 to 881 (AAEK…EKAA), 900 to 922 (EKELAEKKKCEEAAKKEKEVAER), and 934 to 1013 (KAAE…AAEK). Positions 766 to 881 (KCRELAKKKA…AEKKKCEKAA (116 aa)) are enriched in basic and acidic residues. Composition is skewed to basic residues over residues 934–949 (KAAEKKKCKKLAKKEK) and 956–976 (KLKKKAGKGKKKCKKLGKKSK). Over residues 977-1013 (RAAEKKKCAEAAKKEKEAATKKKCEERAKKQKEAAEK) the composition is skewed to basic and acidic residues. Disordered stretches follow at residues 1076–1095 (EKKQCEERAKKEKEAAEKKQ) and 1104–1212 (KEAA…EEAA). Basic and acidic residues predominate over residues 1353-1370 (KKEKEAAEKKKRCKDLAK). The disordered stretch occupies residues 1353 to 1391 (KKEKEAAEKKKRCKDLAKNKKKGHKKKGRNENRKKRTDC). Residues 1371 to 1391 (NKKKGHKKKGRNENRKKRTDC) are compositionally biased toward basic residues.

In terms of tissue distribution, testis. Primary spermatocytes and early spermatids.

The protein localises to the cytoplasm. Functionally, possible structural role in the sperm tail. In Drosophila hydei (Fruit fly), this protein is Axoneme-associated protein mst101(2) (mst101(2)).